Consider the following 434-residue polypeptide: MTKRDQNEVLFERAQKTIPGGVNSPVRAFRQVGGTPRFISKAKGPYFWDAENKRYIDLIMSWGPMIAGHANPEVVEAVQKAAETSFSYGAPTEGEIELAERICALVPSIEQVRMVSSGTEATMSALRLARGYTNRDLIIKFEGCYHGHADSLLVKAGSGLLTFADSTQNAPSSGGVPQDLVKHTLVLPYNDVEAIEAVFKKQGNEIAAVILEPIAGNMNLIKPSAEFLKALRDLTSQYGSVLIYDEVMTGFRVALGGAQSLQGIVPDLTCLGKVMGGGMPMAAFGGKKEIMSKLAPLGNVYQAGTLSGNPVAVAAGLKTLEIVSRAGFYECLSAQTEKLMLGLKQGADKSGIPFAVDSVGGMFGFYFADAVPSTYEAVTKTNIDAFKKFFHLMLDEGVYLAPSAYEAGFTSIAHDDAVLQVIIDAAEKSFPQLR.

Lys273 carries the N6-(pyridoxal phosphate)lysine modification.

It belongs to the class-III pyridoxal-phosphate-dependent aminotransferase family. HemL subfamily. As to quaternary structure, homodimer. Pyridoxal 5'-phosphate is required as a cofactor.

It localises to the cytoplasm. The enzyme catalyses (S)-4-amino-5-oxopentanoate = 5-aminolevulinate. The protein operates within porphyrin-containing compound metabolism; protoporphyrin-IX biosynthesis; 5-aminolevulinate from L-glutamyl-tRNA(Glu): step 2/2. This chain is Glutamate-1-semialdehyde 2,1-aminomutase, found in Polynucleobacter asymbioticus (strain DSM 18221 / CIP 109841 / QLW-P1DMWA-1) (Polynucleobacter necessarius subsp. asymbioticus).